The sequence spans 529 residues: Auxin response factor 13 (529 aa).

The segment at Met-1–Pro-22 is disordered. Residues Ala-7 to Pro-22 are compositionally biased toward pro residues. A DNA-binding region (TF-B3) is located at residues Tyr-128–Ala-234. Disordered stretches follow at residues Ile-443–Ala-462 and Pro-497–Leu-529. Polar residues predominate over residues Val-444 to Ser-461. Residues Gly-499–Ser-510 are compositionally biased toward acidic residues. Over residues Asp-511–Asn-523 the composition is skewed to polar residues.

Belongs to the ARF family. As to quaternary structure, homo and heterodimers. As to expression, expressed in roots, culms, leaves and young panicles.

The protein localises to the nucleus. In terms of biological role, auxin response factors (ARFs) are transcriptional factors that bind specifically to the DNA sequence 5'-TGTCTC-3' found in the auxin-responsive promoter elements (AuxREs). In Oryza sativa subsp. japonica (Rice), this protein is Auxin response factor 13 (ARF13).